A 271-amino-acid polypeptide reads, in one-letter code: Ribonuclease HII (271 aa).

Residues 84–271 (VLIAGVDEVG…HRMSFLSNYI (188 aa)) enclose the RNase H type-2 domain. 3 residues coordinate a divalent metal cation: Asp-90, Glu-91, and Asp-187.

It belongs to the RNase HII family. The cofactor is Mn(2+). Mg(2+) is required as a cofactor.

It is found in the cytoplasm. It carries out the reaction Endonucleolytic cleavage to 5'-phosphomonoester.. Functionally, endonuclease that specifically degrades the RNA of RNA-DNA hybrids. This Clostridium tetani (strain Massachusetts / E88) protein is Ribonuclease HII.